Consider the following 223-residue polypeptide: MTIAKMIDHTALKPDTTKEQILTLTKEAREYGFASVCVNPTWVKLSAEQLAGAESVVCTVIGFPLGANTPEVKAFEVKDAIQNGAKEVDMVINIGALKDKDDELVERDIRAVVYAAKGKALVKVIIETCLLTDEEKVRACEIAVKAGTDFVKTSTGFSTGGATAEDIALMRKTVGPNIGVKASGGVRTKEDVEKMIEAGATRIGASAGVAIVSGEKPAKPDNY.

The Proton donor/acceptor role is filled by aspartate 89. Residue lysine 152 is the Schiff-base intermediate with acetaldehyde of the active site. Lysine 181 serves as the catalytic Proton donor/acceptor.

This sequence belongs to the DeoC/FbaB aldolase family. DeoC type 1 subfamily.

It is found in the cytoplasm. It catalyses the reaction 2-deoxy-D-ribose 5-phosphate = D-glyceraldehyde 3-phosphate + acetaldehyde. It participates in carbohydrate degradation; 2-deoxy-D-ribose 1-phosphate degradation; D-glyceraldehyde 3-phosphate and acetaldehyde from 2-deoxy-alpha-D-ribose 1-phosphate: step 2/2. Functionally, catalyzes a reversible aldol reaction between acetaldehyde and D-glyceraldehyde 3-phosphate to generate 2-deoxy-D-ribose 5-phosphate. The chain is Deoxyribose-phosphate aldolase from Listeria monocytogenes serotype 4b (strain F2365).